Here is a 396-residue protein sequence, read N- to C-terminus: Putative carbamoyltransferase YgeW (396 aa).

Carbamoyl phosphate is bound by residues Ser71 to Thr74, Gln98, His165 to Gln168, and Cys330 to Leu331.

This sequence belongs to the aspartate/ornithine carbamoyltransferase superfamily. As to quaternary structure, homotrimer.

The sequence is that of Putative carbamoyltransferase YgeW (ygeW) from Escherichia coli O157:H7.